The sequence spans 180 residues: MIIYLHGFDSNSPGNHEKVLQLQFIDPDVRLVSYSTRHPKHDMQHLLKEVDKMLQLNVDERPLICGVGLGGYWAERIGFLCDIRQVVFNPNLFPYENMEGKIDRPEEYADIATKCVTNFREKNRDRCLVILSRHDEALDSQRSAQALHPFYEIVWDEEQTHKFKNISPYLQRIKAFKTLG.

This sequence belongs to the UPF0227 family.

The protein is UPF0227 protein YcfP of Salmonella paratyphi A (strain ATCC 9150 / SARB42).